A 513-amino-acid chain; its full sequence is Dye-decolorizing peroxidase msp1 (513 aa).

Residues Met1–Ala20 form the signal peptide. A propeptide spanning residues Thr21 to Ser55 is cleaved from the precursor. The segment at Arg33–Gln52 is disordered. The Proton acceptor role is filled by Asp228. His365 is a binding site for heme.

Homodimer. Heme b serves as cofactor.

The protein resides in the secreted. The catalysed reaction is Reactive Blue 5 + 2 H2O2 = 2,2'-disulfonyl azobenzene + 3-[(4-amino-6-chloro-1,3,5-triazin-2-yl)amino]benzenesulfonate + phthalate + 2 H2O + 2 H(+). It carries out the reaction 2 a phenolic donor + H2O2 = 2 a phenolic radical donor + 2 H2O. Functionally, manganese-independent peroxidase that is able to convert a large number of compounds, but its physiological substrate is not known. In addition to classic peroxidase substrates (e.g. 2,6-dimethoxyphenol), oxidizes dyes such as Reactive Blue 5. Also degrades beta-carotene. This Mycetinis scorodonius (Garlic mushroom) protein is Dye-decolorizing peroxidase msp1.